Here is a 1371-residue protein sequence, read N- to C-terminus: DNA-directed RNA polymerase subunit beta'' (1371 aa).

Positions 220, 293, 300, and 303 each coordinate Zn(2+).

It belongs to the RNA polymerase beta' chain family. RpoC2 subfamily. As to quaternary structure, in plastids the minimal PEP RNA polymerase catalytic core is composed of four subunits: alpha, beta, beta', and beta''. When a (nuclear-encoded) sigma factor is associated with the core the holoenzyme is formed, which can initiate transcription. It depends on Zn(2+) as a cofactor.

The protein localises to the plastid. It is found in the chloroplast. It carries out the reaction RNA(n) + a ribonucleoside 5'-triphosphate = RNA(n+1) + diphosphate. DNA-dependent RNA polymerase catalyzes the transcription of DNA into RNA using the four ribonucleoside triphosphates as substrates. The sequence is that of DNA-directed RNA polymerase subunit beta'' from Lobularia maritima (Sweet alyssum).